The sequence spans 207 residues: Ribosomal RNA small subunit methyltransferase G (207 aa).

S-adenosyl-L-methionine contacts are provided by residues G76, Q81, V127–E128, and R141.

The protein belongs to the methyltransferase superfamily. RNA methyltransferase RsmG family.

It localises to the cytoplasm. It catalyses the reaction guanosine(527) in 16S rRNA + S-adenosyl-L-methionine = N(7)-methylguanosine(527) in 16S rRNA + S-adenosyl-L-homocysteine. Functionally, specifically methylates the N7 position of guanine in position 527 of 16S rRNA. The polypeptide is Ribosomal RNA small subunit methyltransferase G (Neisseria meningitidis serogroup A / serotype 4A (strain DSM 15465 / Z2491)).